Here is a 381-residue protein sequence, read N- to C-terminus: Acetylornithine deacetylase (381 aa).

His79 is a binding site for Zn(2+). Asp81 is a catalytic residue. A Zn(2+)-binding site is contributed by Asp111. The active site involves Glu143. The Zn(2+) site is built by Glu144, Glu168, and His354.

This sequence belongs to the peptidase M20A family. ArgE subfamily. As to quaternary structure, homodimer. Zn(2+) is required as a cofactor. Requires Co(2+) as cofactor. Glutathione serves as cofactor.

Its subcellular location is the cytoplasm. It catalyses the reaction N(2)-acetyl-L-ornithine + H2O = L-ornithine + acetate. It functions in the pathway amino-acid biosynthesis; L-arginine biosynthesis; L-ornithine from N(2)-acetyl-L-ornithine (linear): step 1/1. Functionally, catalyzes the hydrolysis of the amide bond of N(2)-acetylated L-amino acids. Cleaves the acetyl group from N-acetyl-L-ornithine to form L-ornithine, an intermediate in L-arginine biosynthesis pathway, and a branchpoint in the synthesis of polyamines. The protein is Acetylornithine deacetylase of Buchnera aphidicola subsp. Schizaphis graminum (strain Sg).